The primary structure comprises 158 residues: MAFDETYNEPESTEVLVKSLDPEHPAQLHYAHAGDAGADLITTVDVTLKPFERALVPTGVAIALPAGYVALVHPRSGLAAKQGVTVLNAPGTVDAGYRGEIKVPLINLDPKHTAVFHPGDRIAQLVIQRYVEARFIPAETLPGSDRAERGFGSTGVAS.

Substrate-binding positions include 75-77, asparagine 88, 92-94, and lysine 102; these read RSG and TVD.

The protein belongs to the dUTPase family. It depends on Mg(2+) as a cofactor.

The enzyme catalyses dUTP + H2O = dUMP + diphosphate + H(+). Its pathway is pyrimidine metabolism; dUMP biosynthesis; dUMP from dCTP (dUTP route): step 2/2. This enzyme is involved in nucleotide metabolism: it produces dUMP, the immediate precursor of thymidine nucleotides and it decreases the intracellular concentration of dUTP so that uracil cannot be incorporated into DNA. The polypeptide is Deoxyuridine 5'-triphosphate nucleotidohydrolase (Bifidobacterium longum (strain DJO10A)).